A 57-amino-acid polypeptide reads, in one-letter code: Andropin (57 aa).

The first 23 residues, 1-23 (MKYFVVLVVLALILAISVGPSDA), serve as a signal peptide directing secretion.

The protein belongs to the andropin family. In terms of tissue distribution, ejaculatory duct of adult males.

It localises to the secreted. Its function is as follows. Male-specific peptide with moderate activity against Gram-positive bacteria. This chain is Andropin (Anp), found in Drosophila melanogaster (Fruit fly).